The primary structure comprises 1475 residues: Alpha-glucan water dikinase, chloroplastic (1475 aa).

The N-terminal 85 residues, 1 to 85 (MSNSIGRNVL…HRPVLITPRA (85 aa)), are a transit peptide targeting the chloroplast. The Tele-phosphohistidine intermediate role is filled by H1077.

This sequence belongs to the PEP-utilizing enzyme family. Homodimer. The cofactor is Mg(2+).

Its subcellular location is the plastid. It is found in the chloroplast. It catalyses the reaction [(1-&gt;4)-alpha-D-glucosyl](n) + n ATP + n H2O = [(1-&gt;4)-6-phospho-alpha-D-glucosyl](n) + n AMP + n phosphate + 2n H(+). Functionally, mediates the incorporation of phosphate into starch-like alpha-glucan, mostly at the C-6 position of glucose units. Acts as an overall regulator of starch mobilization. Required for starch degradation, suggesting that the phosphate content of starch regulates its degradability. In Citrus reticulata (Tangerine), this protein is Alpha-glucan water dikinase, chloroplastic (R1).